A 292-amino-acid polypeptide reads, in one-letter code: (S)-phenoxypropionate/alpha-ketoglutarate-dioxygenase (292 aa).

Fe cation-binding residues include His-108 and Asp-110. 2-oxoglutarate contacts are provided by Thr-135 and Trp-247. His-262 contacts Fe cation. Position 273 (Arg-273) interacts with 2-oxoglutarate.

Belongs to the TfdA dioxygenase family. Monomer. Fe cation is required as a cofactor. It depends on L-ascorbate as a cofactor.

It carries out the reaction (S)-2-(4-chloro-2-methylphenoxy)propanoate + 2-oxoglutarate + O2 = 2-methyl-4-chlorophenol + pyruvate + succinate + CO2. The catalysed reaction is (S)-(2,4-dichlorophenoxy)propanoate + 2-oxoglutarate + O2 = 2,4-dichlorophenol + pyruvate + succinate + CO2. It functions in the pathway xenobiotic degradation; 2-(2,4-dichlorophenoxy)propanoate degradation. Inhibited by divalent cations, most significantly by copper and nickel, and by diethylpyrocarbonate (DEPC). Functionally, involved in the degradation of the phenoxypropionate herbicides. Catalyzes the enantiospecific cleavage of the ether bond in the herbicid S-dichlorprop ((S)-2-(2,4-dichlorophenoxy)propionate)(S-2,4-DP) and S-mecoprop ((S)-2-(4-chloro-2-methylphenoxy)propionate)(S-2,4-MCPP). It can also accept (RS)-2-(4-chlorophenoxy)propionate, (RS)-2-(m-chlorophenoxy)propionate and phenoxyacetate derivatives such as 2,4-dichlorophenoxyacetate (2,4-D), however it can only accept 2-oxoglutarate as oxygen acceptor. This is (S)-phenoxypropionate/alpha-ketoglutarate-dioxygenase from Delftia acidovorans (Pseudomonas acidovorans).